We begin with the raw amino-acid sequence, 84 residues long: ATP synthase subunit c (84 aa).

The next 2 helical transmembrane spans lie at 9 to 29 (IFGS…GFSL) and 54 to 74 (IVAG…LLFI).

It belongs to the ATPase C chain family. As to quaternary structure, F-type ATPases have 2 components, F(1) - the catalytic core - and F(0) - the membrane proton channel. F(1) has five subunits: alpha(3), beta(3), gamma(1), delta(1), epsilon(1). F(0) has three main subunits: a(1), b(2) and c(10-14). The alpha and beta chains form an alternating ring which encloses part of the gamma chain. F(1) is attached to F(0) by a central stalk formed by the gamma and epsilon chains, while a peripheral stalk is formed by the delta and b chains.

Its subcellular location is the cell inner membrane. Its function is as follows. F(1)F(0) ATP synthase produces ATP from ADP in the presence of a proton or sodium gradient. F-type ATPases consist of two structural domains, F(1) containing the extramembraneous catalytic core and F(0) containing the membrane proton channel, linked together by a central stalk and a peripheral stalk. During catalysis, ATP synthesis in the catalytic domain of F(1) is coupled via a rotary mechanism of the central stalk subunits to proton translocation. Key component of the F(0) channel; it plays a direct role in translocation across the membrane. A homomeric c-ring of between 10-14 subunits forms the central stalk rotor element with the F(1) delta and epsilon subunits. This Histophilus somni (strain 2336) (Haemophilus somnus) protein is ATP synthase subunit c.